Here is a 507-residue protein sequence, read N- to C-terminus: MAAIGVHLGCTCACVAVFKDGRADVVANDAGDRVTPAVVGFLEKEVIVGLAAKQSRVRNATNTIVKVKQILGRSYGDPIAQKHITESKCTVVEKGGKPKYEIDTGETQKLVSSEDVAKLIFSKMKETAQSALGSDVNDVVITVPFDFGESQKKALGEAASAAGFNILRMIHEPSAALLAYGIGQESPTGKSNVLVYKLGGTSLSVTMIEVNSGIYRVLATSTYDGIGGVCFTEALAQHLASEFQRTYKQDIRGNARAMMKLMNSADVAKHALSTLGSSNCFVDSLYDGIDFDCSVSRARFELICSSLFNQCIDPIKKLLEQVGFKATDVNQVVLCGGSARIPKLQQLIKDLFPEVEMLSSIPPDEVIPVGAAIQAGILLGKENTDLDTITIECSASDMLVKEIDESGNKFTVLLPSGTPLPARRQHVLQAPGNISSVCLELYESDGKSSVSEECKFAQVVLKDLQKKTSGVRDILTVLTMKRDGSLHITCTDKDSGKSEMITIEDTS.

Belongs to the heat shock protein 70 family. In terms of assembly, component of ribosome-associated complex (RAC).

It is found in the cytoplasm. Its subcellular location is the cytosol. In terms of biological role, component of the ribosome-associated complex (RAC), a complex involved in folding or maintaining nascent polypeptides in a folding-competent state. This Xenopus laevis (African clawed frog) protein is Heat shock 70 kDa protein 14-B (hspa14-b).